Reading from the N-terminus, the 97-residue chain is C-C motif chemokine 7 (97 aa).

A signal peptide spans 1–23 (MQISAALLCVLLTAAAFTVHVWA). Gln-24 bears the Pyrrolidone carboxylic acid mark. Asn-29 carries N-linked (GlcNAc...) asparagine glycosylation. 2 disulfide bridges follow: Cys-33–Cys-57 and Cys-34–Cys-73.

It belongs to the intercrine beta (chemokine CC) family. Monomer. Interacts with TNFAIP6 (via Link domain).

Its subcellular location is the secreted. In terms of biological role, chemotactic factor that attracts monocytes and eosinophils, but not neutrophils. Augments monocyte anti-tumor activity. This Rattus norvegicus (Rat) protein is C-C motif chemokine 7 (Ccl7).